The following is an 828-amino-acid chain: USP6 N-terminal-like protein (828 aa).

The residue at position 1 (methionine 1) is an N-acetylmethionine. The Rab-GAP TBC domain occupies 100 to 292; the sequence is GIPLQLRGEV…RIWDIYIFEG (193 aa). Over residues 355–367 the composition is skewed to basic and acidic residues; sequence DLPEPGKEDEYPK. Residues 355–722 form a disordered region; sequence DLPEPGKEDE…NSGSPKNGKL (368 aa). Serine 391, serine 396, and serine 400 each carry phosphoserine. Residues 434–451 show a composition bias toward basic and acidic residues; the sequence is KSVEEESKKLKDEADFQR. Low complexity predominate over residues 465-478; that stretch reads NHAAANQNSNATSN. 2 stretches are compositionally biased toward basic and acidic residues: residues 498 to 508 and 535 to 544; these read RTAKYTMEGKG and KALDAEDGKR. Residues serine 546 and serine 549 each carry the phosphoserine modification. Tyrosine 582 is subject to Phosphotyrosine. The residue at position 585 (serine 585) is a Phosphoserine. Positions 592-603 are enriched in polar residues; sequence PSSSPSKVSNKF. Phosphoserine occurs at positions 642, 655, 659, 676, and 680. Composition is skewed to polar residues over residues 648–666 and 673–683; these read TANS…QLNP and STLSVSASPEK. A compositionally biased stretch (low complexity) spans 686 to 697; that stretch reads SRPSPLVLPSSR. Serine 716 carries the post-translational modification Phosphoserine. Tyrosine 729 carries the post-translational modification Phosphotyrosine. The interval 789 to 817 is disordered; the sequence is KASPAAEDASPSGYPYSGPPPPAYHYRNR.

In terms of assembly, interacts with EPS8. In terms of tissue distribution, widely expressed.

Its subcellular location is the golgi apparatus. It is found in the cytoplasmic vesicle. Its function is as follows. Acts as a GTPase-activating protein for RAB5A and RAB43. Involved in receptor trafficking. In complex with EPS8 inhibits internalization of EGFR. Involved in retrograde transport from the endocytic pathway to the Golgi apparatus. Involved in the transport of Shiga toxin from early and recycling endosomes to the trans-Golgi network. Required for structural integrity of the Golgi complex. This chain is USP6 N-terminal-like protein (USP6NL), found in Homo sapiens (Human).